The primary structure comprises 963 residues: Phosphofurin acidic cluster sorting protein 1 (963 aa).

Residues Met1 to Gly22 are compositionally biased toward gly residues. 2 disordered regions span residues Met1 to Thr72 and Val78 to Ala97. Ala2 carries the N-acetylalanine modification. Position 28 is a phosphoserine (Ser28). The residue at position 46 (Thr46) is a Phosphothreonine. Positions Ala53–Thr72 are enriched in low complexity. The involved in binding to AP-1 stretch occupies residues Glu168 to Phe175. Residue Tyr251 is modified to Phosphotyrosine. The span at Gly262–Asp273 shows a compositional bias: basic and acidic residues. Disordered stretches follow at residues Gly262 to Gln299 and Asn377 to Thr428. A compositionally biased stretch (acidic residues) spans Asn276 to Asp293. A coiled-coil region spans residues His353–Asn377. Phosphoserine is present on residues Ser379 and Ser381. Over residues Met406–Thr428 the composition is skewed to polar residues. Ser430 and Ser495 each carry phosphoserine. 2 disordered regions span residues Pro476–Gln542 and Ser760–Ser804. Positions Met483–Pro496 are enriched in polar residues. Thr504 carries the post-translational modification Phosphothreonine. 5 positions are modified to phosphoserine: Ser519, Ser528, Ser529, Ser531, and Ser534. A compositionally biased stretch (low complexity) spans Ser770–Ser804.

The protein belongs to the PACS family. Associates with AP-1 and AP-3 but not with AP-2 complexes. Interacts with FURIN. Forms a ternary complex with FURIN and AP-1. Interacts with NPHP1; the interaction is dependent of NPHP1 phosphorylation by CK2. Interacts with PKD2 (via acidic region). Interacts with SORL1. Interacts with WDR37. As to quaternary structure, (Microbial infection) Interacts with HIV-1 Nef. In terms of assembly, (Microbial infection) Interacts with Epstein-barr virus protein BBLF1.

It is found in the golgi apparatus. The protein localises to the trans-Golgi network. Coat protein that is involved in the localization of trans-Golgi network (TGN) membrane proteins that contain acidic cluster sorting motifs. Controls the endosome-to-Golgi trafficking of furin and mannose-6-phosphate receptor by connecting the acidic-cluster-containing cytoplasmic domain of these molecules with the adapter-protein complex-1 (AP-1) of endosomal clathrin-coated membrane pits. Involved in HIV-1 nef-mediated removal of MHC-I from the cell surface to the TGN. Required for normal ER Ca2+ handling in lymphocytes. Together with WDR37, it plays an essential role in lymphocyte development, quiescence and survival. Required for stabilizing peripheral lymphocyte populations. This is Phosphofurin acidic cluster sorting protein 1 (PACS1) from Homo sapiens (Human).